We begin with the raw amino-acid sequence, 115 residues long: NADH-ubiquinone oxidoreductase chain 3 (115 aa).

3 helical membrane passes run 4 to 24 (LVAL…AFWL), 55 to 75 (FFLV…LLPL), and 87 to 107 (MMLT…YEWM).

It belongs to the complex I subunit 3 family. In terms of assembly, core subunit of respiratory chain NADH dehydrogenase (Complex I) which is composed of 45 different subunits. Interacts with TMEM186. Interacts with TMEM242.

It is found in the mitochondrion inner membrane. It carries out the reaction a ubiquinone + NADH + 5 H(+)(in) = a ubiquinol + NAD(+) + 4 H(+)(out). Functionally, core subunit of the mitochondrial membrane respiratory chain NADH dehydrogenase (Complex I) which catalyzes electron transfer from NADH through the respiratory chain, using ubiquinone as an electron acceptor. Essential for the catalytic activity of complex I. The sequence is that of NADH-ubiquinone oxidoreductase chain 3 from Habromys lophurus (Crested-tailed deer mouse).